Here is a 268-residue protein sequence, read N- to C-terminus: MKYARVRTHGGVSIISAFIDGMGGAFSIDVPMTVTVREGTCSEEKKISEDIRRYLSIATCFRFTVDSRIPSGYGLKSSSAYILALAKAMAVYSGIDISDMEIMTASADISKNSGLSMTGALDDLCQAMYGGYCLTDNRKMKILRRGRLPEMPVLVCADGDKRSSGKVSIEGHFTNAIRRVEDLAFKGRIFDAAVANGLIYGSIFGMDLRLIGSMLKAGALYSSQSGKGPAIFGIFADRRSAMNARSDIGFGIVTKINNQGIRYWKYDS.

An ATP-binding site is contributed by 70-80 (PSGYGLKSSSA).

This sequence belongs to the GHMP kinase family. Archaeal shikimate kinase subfamily.

The protein localises to the cytoplasm. The catalysed reaction is shikimate + ATP = 3-phosphoshikimate + ADP + H(+). It functions in the pathway metabolic intermediate biosynthesis; chorismate biosynthesis; chorismate from D-erythrose 4-phosphate and phosphoenolpyruvate: step 5/7. This chain is Shikimate kinase (aroK), found in Thermoplasma acidophilum (strain ATCC 25905 / DSM 1728 / JCM 9062 / NBRC 15155 / AMRC-C165).